The primary structure comprises 180 residues: NADH-quinone oxidoreductase subunit I (180 aa).

2 consecutive 4Fe-4S ferredoxin-type domains span residues 50-80 (LTRD…LQKA) and 90-119 (EFFR…LTPD). C60, C63, C66, C70, C99, C102, C105, and C109 together coordinate [4Fe-4S] cluster.

The protein belongs to the complex I 23 kDa subunit family. NDH-1 is composed of 13 different subunits. Subunits NuoA, H, J, K, L, M, N constitute the membrane sector of the complex. The cofactor is [4Fe-4S] cluster.

The protein localises to the cell inner membrane. It catalyses the reaction a quinone + NADH + 5 H(+)(in) = a quinol + NAD(+) + 4 H(+)(out). In terms of biological role, NDH-1 shuttles electrons from NADH, via FMN and iron-sulfur (Fe-S) centers, to quinones in the respiratory chain. The immediate electron acceptor for the enzyme in this species is believed to be ubiquinone. Couples the redox reaction to proton translocation (for every two electrons transferred, four hydrogen ions are translocated across the cytoplasmic membrane), and thus conserves the redox energy in a proton gradient. The sequence is that of NADH-quinone oxidoreductase subunit I from Yersinia enterocolitica serotype O:8 / biotype 1B (strain NCTC 13174 / 8081).